The chain runs to 994 residues: Chloride channel protein 1 (994 aa).

The Cytoplasmic portion of the chain corresponds to 1–118 (MERSQSQRHG…VLRRKLGEDW (118 aa)). A helical transmembrane segment spans residues 119–150 (IFLVLLGLLMALVSWCMDYVSAKSLQAYKWTY). Residues 151 to 158 (AQMKPSLP) lie on the Extracellular side of the membrane. A helical membrane pass occupies residues 159–179 (LQYLAWVTFPLILILFSALFC). Residues 180-183 (QLIS) lie on the Cytoplasmic side of the membrane. The segment at residues 184-189 (PQAVGS) is an intramembrane region (note=Loop between two helices). The short motif at 188–192 (GSGIP) is the Selectivity filter part_1 element. S189 is a binding site for chloride. Positions 190–195 (GIPEMK) form an intramembrane region, helical. The Cytoplasmic portion of the chain corresponds to 196 to 208 (TILRGVVLKEYLT). An intramembrane region (helical) is located at residues 209 to 224 (LKAFVAKVVALTAGLG). Residues 225–230 (SGIPVG) constitute an intramembrane region (note=Loop between two helices). The short motif at 230–234 (GKEGP) is the Selectivity filter part_2 element. The segment at residues 231–246 (KEGPFVHIASICAAVL) is an intramembrane region (helical). Residues 247 to 268 (SKFMSMFSGVYEQPYYYTDILT) are Cytoplasmic-facing. Intramembrane regions (helical) lie at residues 269-280 (VGCAVGVGCCFG) and 281-290 (TPLGGVLFSI). The Cytoplasmic segment spans residues 291-301 (EVTSTYFAVRN). The chain crosses the membrane as a helical span at residues 302-321 (YWRGFFAATFSAFVFRVLAV). Residues 322 to 347 (WNKDAVTITALFRTNFRMDFPFDLKE) are Extracellular-facing. A helical transmembrane segment spans residues 348–376 (LPAFAVIGICCGFLGAVFVYLHRQVMLGV). The Cytoplasmic segment spans residues 377–390 (RKHKCLSQFLAKHR). A helical transmembrane segment spans residues 391–408 (LLYPGIVTFVIASLTFPP). The Extracellular portion of the chain corresponds to 409–414 (GMGQFM). The segment at residues 415–418 (AGEL) is an intramembrane region (note=Loop between two helices). The helical intramembrane region spans 419-426 (MPREAIST). At 427–457 (LFDNNTWVKHIGDPQSLGQSAVWLHPQVNVI) the chain is on the extracellular side. An intramembrane region (helical) is located at residues 458–475 (IIILLFFVMKFWMSIVAT). The note=Loop between two helices intramembrane region spans 476–482 (TMPIPCG). Positions 482–486 (GGFMP) match the Selectivity filter part_3 motif. The helical intramembrane region spans 483–498 (GFMPVFVLGAAFGRLV). F484 lines the chloride pocket. Residues 499–521 (GEIMAMLFPEGILFDDIIYKILP) lie on the Extracellular side of the membrane. Positions 522–538 (GGYAVIGAAALTGAVSH) form an intramembrane region, helical. Residues 539-540 (TV) constitute an intramembrane region (note=Loop between two helices). Positions 541–554 (STAVICFELTGQIA) form an intramembrane region, helical. Residues 555-557 (HIL) are Extracellular-facing. Residues 558–571 (PMMVAVILANMVAQ) constitute an intramembrane region (helical). The note=Loop between two helices intramembrane region spans 572-575 (SLQP). Positions 576 to 578 (SLY) form an intramembrane region, helical. Y578 contributes to the chloride binding site. Topologically, residues 579–994 (DSIIQVKKLP…DEEDEDELIL (416 aa)) are cytoplasmic. Positions 609 to 668 (MVRDVKFVSASCTYGELRNLLQATTVKTLPLVDSKDSMILLGSVERSELQSLLQRHLCAE) constitute a CBS 1 domain. Residues 710-770 (EDEDEDLSRK…PEASDSADQR (61 aa)) are disordered. Over residues 725–739 (TPAPPPPSPPPPPSQ) the composition is skewed to pro residues. Positions 827-882 (IDQSPFQLVEQTTLHKTHTLFSLLGLHLAYVTSMGKLRGVLALEELQKAIEGHTKS) constitute a CBS 2 domain. Disordered stretches follow at residues 886–954 (LRPP…ARAE) and 971–994 (ELAD…ELIL). S892 carries the phosphoserine modification. Residues 933-943 (PETPVPPPSPE) are compositionally biased toward pro residues. Residues 985–994 (DEEDEDELIL) are compositionally biased toward acidic residues.

The protein belongs to the chloride channel (TC 2.A.49) family. ClC-1/CLCN1 subfamily. In terms of assembly, homodimer. As to expression, predominantly expressed in skeletal muscles.

The protein resides in the cell membrane. It localises to the sarcolemma. The protein localises to the T-tubule. It carries out the reaction chloride(in) = chloride(out). The catalysed reaction is thiocyanate(in) = thiocyanate(out). The enzyme catalyses bromide(in) = bromide(out). It catalyses the reaction nitrate(in) = nitrate(out). It carries out the reaction iodide(out) = iodide(in). Modulated by membrane voltage with depolarization favouring channel opening and hyperpolarization favouring channel closure. Inhibited by acidic pH and ATP binding due to a shift of voltage dependence of common gating to more positive voltages. Inhibited by 9-anthracene-carboxylic. Its function is as follows. Voltage-gated chloride channel involved in skeletal muscle excitability. Generates most of the plasma membrane chloride conductance in skeletal muscle fibers, stabilizes the resting membrane potential and contributes to the repolarization phase during action potential firing. Forms a homodimeric channel where each subunit has its own ion conduction pathway. Conducts double-barreled currents controlled by two types of gates, two fast glutamate gates that control each subunit independently and a slow common gate that opens and shuts off both subunits simultaneously. Has a significant open probability at muscle resting potential and is further activated upon membrane depolarization. Permeable to small monovalent anions with ion selectivity for chloride &gt; thiocyanate &gt; bromide &gt; nitrate &gt; iodide. The chain is Chloride channel protein 1 (Clcn1) from Mus musculus (Mouse).